Reading from the N-terminus, the 1358-residue chain is DNA mismatch repair protein Msh6 (1358 aa).

The disordered stretch occupies residues 1-87 (MSRQSTLYSF…SSAQAVPPSS (87 aa)). A phosphoserine mark is found at Ser-14, Ser-38, and Ser-40. Low complexity predominate over residues 25 to 46 (AEASRQGAAASGASASRGGDAA). Lys-67 is subject to N6-acetyllysine. Positions 76-87 (ASSSAQAVPPSS) are enriched in low complexity. Phosphoserine occurs at positions 91, 137, 200, 219, and 227. Residues 92 to 154 (PGDLVWAKME…KRMLKPYTGS (63 aa)) form the PWWP domain. A disordered region spans residues 197 to 360 (DEPSEPEEEE…VSGGGNDSSG (164 aa)). 2 stretches are compositionally biased toward acidic residues: residues 198–209 (EPSEPEEEEETE) and 219–231 (SEEDNYNESEEEA). Over residues 240-249 (RSSRQVKKRR) the composition is skewed to basic residues. Ser-252, Ser-254, Ser-256, and Ser-261 each carry phosphoserine. Residues 263 to 273 (VEFKPDTKQEG) are compositionally biased toward basic and acidic residues. At Thr-269 the chain carries Phosphothreonine. Phosphoserine occurs at positions 274, 275, 279, and 280. Residues 329–351 (LSETKSTLSAFSAPQNSESQTHV) show a composition bias toward polar residues. Thr-487 carries the phosphothreonine modification. Lys-503 carries the post-translational modification N6-acetyllysine. A phosphoserine mark is found at Ser-827 and Ser-932. Residue Thr-1007 is modified to Phosphothreonine. 1132-1139 (GPNMGGKS) provides a ligand contact to ATP.

The protein belongs to the DNA mismatch repair MutS family. In terms of assembly, component of the DNA mismatch repair (MMR) complex composed at least of MSH2, MSH3, MSH6, PMS1 and MLH1. Heterodimer consisting of MSH2-MSH6 (MutS alpha). Forms a ternary complex with MutL alpha (MLH1-PMS1). Interacts with MCM9. Part of the BRCA1-associated genome surveillance complex (BASC), which contains BRCA1, MSH2, MSH6, MLH1, ATM, BLM, PMS2 and the RAD50-MRE11-NBS1 protein complex. This association could be a dynamic process changing throughout the cell cycle and within subnuclear domains. Phosphorylated by PRKCZ, which may prevent MutS alpha degradation by the ubiquitin-proteasome pathway.

It is found in the nucleus. It localises to the chromosome. Functionally, component of the post-replicative DNA mismatch repair system (MMR). Heterodimerizes with MSH2 to form MutS alpha, which binds to DNA mismatches thereby initiating DNA repair. When bound, MutS alpha bends the DNA helix and shields approximately 20 base pairs, and recognizes single base mismatches and dinucleotide insertion-deletion loops (IDL) in the DNA. After mismatch binding, forms a ternary complex with the MutL alpha heterodimer, which is thought to be responsible for directing the downstream MMR events, including strand discrimination, excision, and resynthesis. ATP binding and hydrolysis play a pivotal role in mismatch repair functions. The ATPase activity associated with MutS alpha regulates binding similar to a molecular switch: mismatched DNA provokes ADP--&gt;ATP exchange, resulting in a discernible conformational transition that converts MutS alpha into a sliding clamp capable of hydrolysis-independent diffusion along the DNA backbone. This transition is crucial for mismatch repair. MutS alpha may also play a role in DNA homologous recombination repair. Recruited on chromatin in G1 and early S phase via its PWWP domain that specifically binds trimethylated 'Lys-36' of histone H3 (H3K36me3): early recruitment to chromatin to be replicated allowing a quick identification of mismatch repair to initiate the DNA mismatch repair reaction. The protein is DNA mismatch repair protein Msh6 of Mus musculus (Mouse).